The sequence spans 444 residues: Glycoprotein GX (444 aa).

Residues 1 to 24 form the signal peptide; it reads MPAARTGTLAAVALILLCGAAVLG. N-linked (GlcNAc...) asparagine; by host glycans are attached at residues Asn117, Asn240, and Asn335. The helical transmembrane segment at 390 to 414 threads the bilayer; that stretch reads GILIGLAIALLVLLFSLVIVLVCAC.

Belongs to the herpesviridae glycoprotein G family.

It localises to the membrane. This is Glycoprotein GX from Bos taurus (Bovine).